We begin with the raw amino-acid sequence, 286 residues long: 4-diphosphocytidyl-2-C-methyl-D-erythritol kinase (286 aa).

The active site involves Lys-11. ATP is bound at residue Pro-93–Ser-103. The active site involves Asp-135.

This sequence belongs to the GHMP kinase family. IspE subfamily.

It carries out the reaction 4-CDP-2-C-methyl-D-erythritol + ATP = 4-CDP-2-C-methyl-D-erythritol 2-phosphate + ADP + H(+). The protein operates within isoprenoid biosynthesis; isopentenyl diphosphate biosynthesis via DXP pathway; isopentenyl diphosphate from 1-deoxy-D-xylulose 5-phosphate: step 3/6. Its function is as follows. Catalyzes the phosphorylation of the position 2 hydroxy group of 4-diphosphocytidyl-2C-methyl-D-erythritol. In Chlorobaculum parvum (strain DSM 263 / NCIMB 8327) (Chlorobium vibrioforme subsp. thiosulfatophilum), this protein is 4-diphosphocytidyl-2-C-methyl-D-erythritol kinase.